The primary structure comprises 585 residues: CTP synthase (585 aa).

Positions 1–281 are amidoligase domain; it reads MPALRKHPHT…DAYVVRRLNL (281 aa). S23 contributes to the CTP binding site. S23 serves as a coordination point for UTP. Residues 24-29 and D81 each bind ATP; that span reads SLGKGL. Mg(2+) is bound by residues D81 and E155. CTP is bound by residues 162–164, 202–207, and K238; these read DIE and KTKPTQ. UTP is bound by residues 202-207 and K238; that span reads KTKPTQ. Residues 306–554 form the Glutamine amidotransferase type-1 domain; the sequence is RIALVGKYID…VGAAVEYNNG (249 aa). L-glutamine is bound at residue G369. Residue C396 is the Nucleophile; for glutamine hydrolysis of the active site. Residues 397 to 400, E419, and R480 each bind L-glutamine; that span reads LGLQ. Active-site residues include H527 and E529. A disordered region spans residues 564–585; it reads IPTADHQSNGAEHALEDAPARG. Residues 576-585 show a composition bias toward basic and acidic residues; it reads HALEDAPARG.

Belongs to the CTP synthase family. In terms of assembly, homotetramer.

The catalysed reaction is UTP + L-glutamine + ATP + H2O = CTP + L-glutamate + ADP + phosphate + 2 H(+). It catalyses the reaction L-glutamine + H2O = L-glutamate + NH4(+). The enzyme catalyses UTP + NH4(+) + ATP = CTP + ADP + phosphate + 2 H(+). It functions in the pathway pyrimidine metabolism; CTP biosynthesis via de novo pathway; CTP from UDP: step 2/2. With respect to regulation, allosterically activated by GTP, when glutamine is the substrate; GTP has no effect on the reaction when ammonia is the substrate. The allosteric effector GTP functions by stabilizing the protein conformation that binds the tetrahedral intermediate(s) formed during glutamine hydrolysis. Inhibited by the product CTP, via allosteric rather than competitive inhibition. Functionally, catalyzes the ATP-dependent amination of UTP to CTP with either L-glutamine or ammonia as the source of nitrogen. Regulates intracellular CTP levels through interactions with the four ribonucleotide triphosphates. This Mycolicibacterium gilvum (strain PYR-GCK) (Mycobacterium gilvum (strain PYR-GCK)) protein is CTP synthase.